The chain runs to 255 residues: Sulfate transporter CysZ (255 aa).

The next 4 helical transmembrane spans lie at 26-46 (LFVL…IYFA), 71-91 (LLWP…FTML), 150-170 (LFIL…WLLF), and 211-231 (IVYL…AAVA).

It belongs to the CysZ family.

The protein localises to the cell inner membrane. Functionally, high affinity, high specificity proton-dependent sulfate transporter, which mediates sulfate uptake. Provides the sulfur source for the cysteine synthesis pathway. The polypeptide is Sulfate transporter CysZ (Pseudomonas fluorescens (strain SBW25)).